A 368-amino-acid polypeptide reads, in one-letter code: Leu/Ile/Val-binding protein homolog 3 (368 aa).

The N-terminal stretch at 1–23 is a signal peptide; the sequence is MNLKLLSSVAFAATIGFASAAYA.

The protein belongs to the leucine-binding protein family.

Component of an amino-acid transport system. This chain is Leu/Ile/Val-binding protein homolog 3, found in Brucella melitensis biotype 1 (strain ATCC 23456 / CCUG 17765 / NCTC 10094 / 16M).